The primary structure comprises 76 residues: MMRKWLKKNRLEKGFTQEEVAKAAQIGRAYYTMIENGTRKPSVIVSKKIGEKLGFDWTIFFEDVCNETKHNSKDSA.

The region spanning 6-60 (LKKNRLEKGFTQEEVAKAAQIGRAYYTMIENGTRKPSVIVSKKIGEKLGFDWTIF) is the HTH cro/C1-type domain. The segment at residues 17 to 36 (QEEVAKAAQIGRAYYTMIEN) is a DNA-binding region (H-T-H motif).

This is an uncharacterized protein from Bacillus subtilis (strain 168).